Reading from the N-terminus, the 249-residue chain is MLLLFDVGNTHTTIALTKDGKSFDIKRVSTHSIQTEDELYVFLKMFYRNDFKDIVVSSVVPNINYIFEFFAEKYLNKKAIFVSAKEYNEIIWNVNTPEEIGADRVVDVIAASRDYGKDAIVVDFGTAITIEVLKENRYEGGVIIPGFNMMVNALFKGTAKLPKVELKPSDTFVGKDTGSNIRIGVINTILGGIDYTIERIKSDYDLKSAPIIYTGGQSKLIREYLKKDIIYDLELGLRGIYYFYENIAC.

Residue 6–13 coordinates ATP; that stretch reads DVGNTHTT. Residue 101–104 coordinates substrate; that stretch reads GADR. The active-site Proton acceptor is the D103. D123 contributes to the K(+) binding site. T126 provides a ligand contact to ATP. Residue T177 participates in substrate binding.

Belongs to the type III pantothenate kinase family. In terms of assembly, homodimer. NH4(+) serves as cofactor. Requires K(+) as cofactor.

The protein localises to the cytoplasm. It carries out the reaction (R)-pantothenate + ATP = (R)-4'-phosphopantothenate + ADP + H(+). It functions in the pathway cofactor biosynthesis; coenzyme A biosynthesis; CoA from (R)-pantothenate: step 1/5. Its function is as follows. Catalyzes the phosphorylation of pantothenate (Pan), the first step in CoA biosynthesis. The chain is Type III pantothenate kinase from Thermosipho africanus (strain TCF52B).